A 199-amino-acid chain; its full sequence is UPF0316 protein LA_0606 (199 aa).

The next 2 helical transmembrane spans lie at 47–67 (IAAS…TQVI) and 73–93 (VFCY…GMIL).

Belongs to the UPF0316 family.

It is found in the cell membrane. The protein is UPF0316 protein LA_0606 of Leptospira interrogans serogroup Icterohaemorrhagiae serovar Lai (strain 56601).